The following is a 238-amino-acid chain: Ribonuclease PH (238 aa).

Phosphate-binding positions include Arg-86 and 124–126 (GTR).

The protein belongs to the RNase PH family. In terms of assembly, homohexameric ring arranged as a trimer of dimers.

The catalysed reaction is tRNA(n+1) + phosphate = tRNA(n) + a ribonucleoside 5'-diphosphate. Functionally, phosphorolytic 3'-5' exoribonuclease that plays an important role in tRNA 3'-end maturation. Removes nucleotide residues following the 3'-CCA terminus of tRNAs; can also add nucleotides to the ends of RNA molecules by using nucleoside diphosphates as substrates, but this may not be physiologically important. Probably plays a role in initiation of 16S rRNA degradation (leading to ribosome degradation) during starvation. The polypeptide is Ribonuclease PH (Vibrio vulnificus (strain CMCP6)).